The chain runs to 206 residues: Ras-related protein Ral-A (206 aa).

GTP contacts are provided by residues 24–29 (GVGKSA), 40–46 (VEDYEPT), and 127–130 (NKSD). An Effector region motif is present at residues 43–51 (YEPTKADSY). (Microbial infection) O-linked (Glc) threonine; by P.sordellii toxin TcsL glycosylation occurs at threonine 46. Serine 194 is subject to Phosphoserine; by AURKA. Position 203 is a cysteine methyl ester (cysteine 203). The S-geranylgeranyl cysteine moiety is linked to residue cysteine 203. A propeptide spans 204-206 (CIL) (removed in mature form).

It belongs to the small GTPase superfamily. Ras family. Interacts (via effector domain) with RALBP1; during mitosis, recruits RALBP1 to the mitochondrion where it promotes DNM1L phosphorylation and mitochondrial fission. Interacts with EXOC2/Sec5 and EXOC8/Exo84; binding to EXOC2 and EXOC8 is mutually exclusive. Interacts with Clostridium exoenzyme C3. Interacts with RALGPS1. Interacts with LPAR1 and LPAR2. Interacts with GRK2 in response to LPAR1 activation. RALA and GRK2 binding to LPAR1 is mutually exclusive. Interacts with CDC42. Phosphorylated. Phosphorylation at Ser-194 by AURKA/Aurora kinase A, during mitosis, induces RALA localization to the mitochondrion where it regulates mitochondrial fission. In terms of processing, prenylation is essential for membrane localization. The geranylgeranylated form and the farnesylated mutant do not undergo alternative prenylation in response to geranylgeranyltransferase I inhibitors (GGTIs) and farnesyltransferase I inhibitors (FTIs). Post-translationally, (Microbial infection) Glucosylated at Thr-46 by P.sordellii toxin TcsL from strain 6018. Monoglucosylation completely prevents the recognition of the downstream effector, blocking the GTPases in their inactive form. Not glucosylated by TcsL from strain VPI 9048.

It localises to the cell membrane. It is found in the cleavage furrow. Its subcellular location is the midbody. The protein localises to the midbody ring. The protein resides in the mitochondrion. The catalysed reaction is GTP + H2O = GDP + phosphate + H(+). Alternates between an inactive form bound to GDP and an active form bound to GTP. Activated by a guanine nucleotide-exchange factor (GEF) and inactivated by a GTPase-activating protein (GAP). Functionally, multifunctional GTPase involved in a variety of cellular processes including gene expression, cell migration, cell proliferation, oncogenic transformation and membrane trafficking. Accomplishes its multiple functions by interacting with distinct downstream effectors. Acts as a GTP sensor for GTP-dependent exocytosis of dense core vesicles. The RALA-exocyst complex regulates integrin-dependent membrane raft exocytosis and growth signaling. Key regulator of LPAR1 signaling and competes with GRK2 for binding to LPAR1 thus affecting the signaling properties of the receptor. Required for anchorage-independent proliferation of transformed cells. During mitosis, supports the stabilization and elongation of the intracellular bridge between dividing cells. Cooperates with EXOC2 to recruit other components of the exocyst to the early midbody. During mitosis, also controls mitochondrial fission by recruiting to the mitochondrion RALBP1, which mediates the phosphorylation and activation of DNM1L by the mitotic kinase cyclin B-CDK1. This is Ras-related protein Ral-A (RALA) from Homo sapiens (Human).